Here is a 257-residue protein sequence, read N- to C-terminus: MDIPSLSPYAFKFGPIAVHWYGIFMAISIAVGGYYLYKQATKLNYDEDFLLNLLMIVVIFGVIGARLMFVLANYPEWFVKDPVQVFKIYEGGLSWHGAVLGGFLAGLYYCRKKGVRINPLEDFAVVGLALGNMLVRVGNIFNHEVLGRPTEFFFGRWPAQLVGVAIGAFLLIRYFYVQKKHMPDGYQFWSFIFYYQLLRGVFEETVKDVPLVWPVYLNEEWGIGLFTMTQVATPFILILAYWMIKRVLNDPNRQYYD.

The next 7 helical transmembrane spans lie at 13 to 33 (FGPI…AVGG), 49 to 69 (FLLN…RLMF), 88 to 108 (IYEG…AGLY), 123 to 143 (FAVV…IFNH), 152 to 172 (FFFG…FLLI), 186 to 202 (YQFW…RGVF), and 223 to 243 (IGLF…AYWM). R136 contributes to the a 1,2-diacyl-sn-glycero-3-phospho-(1'-sn-glycerol) binding site.

It belongs to the Lgt family.

The protein localises to the cell membrane. It carries out the reaction L-cysteinyl-[prolipoprotein] + a 1,2-diacyl-sn-glycero-3-phospho-(1'-sn-glycerol) = an S-1,2-diacyl-sn-glyceryl-L-cysteinyl-[prolipoprotein] + sn-glycerol 1-phosphate + H(+). It functions in the pathway protein modification; lipoprotein biosynthesis (diacylglyceryl transfer). Its function is as follows. Catalyzes the transfer of the diacylglyceryl group from phosphatidylglycerol to the sulfhydryl group of the N-terminal cysteine of a prolipoprotein, the first step in the formation of mature lipoproteins. The polypeptide is Phosphatidylglycerol--prolipoprotein diacylglyceryl transferase (Caldanaerobacter subterraneus subsp. tengcongensis (strain DSM 15242 / JCM 11007 / NBRC 100824 / MB4) (Thermoanaerobacter tengcongensis)).